The following is a 370-amino-acid chain: Galactose-1-phosphate uridylyltransferase (370 aa).

Cys51 and Cys54 together coordinate Zn(2+). UDP-alpha-D-glucose contacts are provided by residues Ala60 and 76 to 77 (NG). His121 provides a ligand contact to Zn(2+). Asn166 provides a ligand contact to UDP-alpha-D-glucose. Residue His177 coordinates Zn(2+). Residue His179 is the Tele-UMP-histidine intermediate of the active site. Gln181 is a binding site for UDP-alpha-D-glucose. Residues Glu195, His294, His311, and His313 each contribute to the Fe cation site. Residues 326 to 329 (KFLV) and 331 to 332 (FE) each bind UDP-alpha-D-glucose.

Belongs to the galactose-1-phosphate uridylyltransferase type 1 family. As to quaternary structure, homodimer. Zn(2+) serves as cofactor.

It carries out the reaction alpha-D-galactose 1-phosphate + UDP-alpha-D-glucose = alpha-D-glucose 1-phosphate + UDP-alpha-D-galactose. Its pathway is carbohydrate metabolism; galactose metabolism. The chain is Galactose-1-phosphate uridylyltransferase (GAL7) from Kluyveromyces lactis (strain ATCC 8585 / CBS 2359 / DSM 70799 / NBRC 1267 / NRRL Y-1140 / WM37) (Yeast).